Here is a 258-residue protein sequence, read N- to C-terminus: Imidazole glycerol phosphate synthase subunit HisF (258 aa).

Catalysis depends on residues Asp-11 and Asp-130.

The protein belongs to the HisA/HisF family. Heterodimer of HisH and HisF.

It localises to the cytoplasm. The catalysed reaction is 5-[(5-phospho-1-deoxy-D-ribulos-1-ylimino)methylamino]-1-(5-phospho-beta-D-ribosyl)imidazole-4-carboxamide + L-glutamine = D-erythro-1-(imidazol-4-yl)glycerol 3-phosphate + 5-amino-1-(5-phospho-beta-D-ribosyl)imidazole-4-carboxamide + L-glutamate + H(+). It functions in the pathway amino-acid biosynthesis; L-histidine biosynthesis; L-histidine from 5-phospho-alpha-D-ribose 1-diphosphate: step 5/9. IGPS catalyzes the conversion of PRFAR and glutamine to IGP, AICAR and glutamate. The HisF subunit catalyzes the cyclization activity that produces IGP and AICAR from PRFAR using the ammonia provided by the HisH subunit. This chain is Imidazole glycerol phosphate synthase subunit HisF, found in Klebsiella pneumoniae (strain 342).